We begin with the raw amino-acid sequence, 280 residues long: Nitrogenase iron-iron protein alpha chain (280 aa).

Residues Cys-5, Cys-31, and Cys-94 each contribute to the [8Fe-7S] cluster site. A [8Fe-9S-C-homocitryl] cluster-binding site is contributed by Cys-213.

Belongs to the NifD/NifK/NifE/NifN family. Hexamer of two alpha, two beta, and two delta chains. The cofactor is [8Fe-7S] cluster. [8Fe-9S-C-homocitryl] cluster is required as a cofactor.

It carries out the reaction N2 + 8 reduced [2Fe-2S]-[ferredoxin] + 16 ATP + 16 H2O = H2 + 8 oxidized [2Fe-2S]-[ferredoxin] + 2 NH4(+) + 16 ADP + 16 phosphate + 6 H(+). Functionally, this iron-iron protein is part of the nitrogenase complex that catalyzes the key enzymatic reactions in nitrogen fixation. Other nitrogenase complexes utilize a molybdenum-iron protein or a vanadium-iron protein. The chain is Nitrogenase iron-iron protein alpha chain (anfD) from Heliomicrobium gestii (Heliobacterium gestii).